The following is a 453-amino-acid chain: MSEKEIWEKVLEIAQEKLSAVSYSTFLKDTELYTIKDGEAIVLSSIPFNANWLNQQYAEIIQAILFDVVGYEVKPHFITTEELANYSNNETATPKETTKPSTETTEDNHVLGREQFNAHNTFDTFVIGPGNRFPHAASLAVAEAPAKAYNPLFIYGGVGLGKTHLMHAIGHHVLDNNPDAKVIYTSSEKFTNEFIKSIRDNEGEAFRERYRNIDVLLIDDIQFIQNKVQTQEEFFYTFNELHQNNKQIVISSDRPPKEIAQLEDRLRSRFEWGLIVDITPPDYETRMAILQKKIEEEKLDIPPEALNYIANQIQSNIRELEGALTRLLAYSQLLGKPITTELTAEALKDIIQAPKSKKITIQDIQKIVGQYYNVRIEDFSAKKRTKSIAYPRQIAMYLSRELTDFSLPKIGEEFGGRDHTTVIHAHEKISKDLKEDPIFKQEVENLEKEIRNV.

The tract at residues 1-71 (MSEKEIWEKV…QAILFDVVGY (71 aa)) is domain I, interacts with DnaA modulators. The domain II stretch occupies residues 71–114 (YEVKPHFITTEELANYSNNETATPKETTKPSTETTEDNHVLGRE). Residues 115–331 (QFNAHNTFDT…GALTRLLAYS (217 aa)) form a domain III, AAA+ region region. Residues glycine 159, glycine 161, lysine 162, and threonine 163 each coordinate ATP. Residues 332–453 (QLLGKPITTE…ENLEKEIRNV (122 aa)) are domain IV, binds dsDNA.

It belongs to the DnaA family. Oligomerizes as a right-handed, spiral filament on DNA at oriC.

Its subcellular location is the cytoplasm. Functionally, plays an essential role in the initiation and regulation of chromosomal replication. ATP-DnaA binds to the origin of replication (oriC) to initiate formation of the DNA replication initiation complex once per cell cycle. Binds the DnaA box (a 9 base pair repeat at the origin) and separates the double-stranded (ds)DNA. Forms a right-handed helical filament on oriC DNA; dsDNA binds to the exterior of the filament while single-stranded (ss)DNA is stabiized in the filament's interior. The ATP-DnaA-oriC complex binds and stabilizes one strand of the AT-rich DNA unwinding element (DUE), permitting loading of DNA polymerase. After initiation quickly degrades to an ADP-DnaA complex that is not apt for DNA replication. Binds acidic phospholipids. The protein is Chromosomal replication initiator protein DnaA of Staphylococcus aureus (strain Mu3 / ATCC 700698).